Here is a 189-residue protein sequence, read N- to C-terminus: Inner membrane-spanning protein YciB (189 aa).

5 consecutive transmembrane segments (helical) span residues 3–23 (LLID…WGIY), 47–67 (IEPM…ATLL), 76–96 (WKPT…QLFF), 121–141 (WSWT…AHAF), and 149–169 (FKLF…ALYL).

The protein belongs to the YciB family.

It localises to the cell inner membrane. Functionally, plays a role in cell envelope biogenesis, maintenance of cell envelope integrity and membrane homeostasis. This Paracidovorax citrulli (strain AAC00-1) (Acidovorax citrulli) protein is Inner membrane-spanning protein YciB.